The chain runs to 134 residues: Complexin-1 (134 aa).

2 disordered regions span residues 1-60 (MEFV…AERE) and 74-113 (KKEE…EEED). A compositionally biased stretch (basic and acidic residues) spans 15–60 (DMGKMLGGDEEKDPDAAKKEEERQEALRQAEEERKAKYAKMEAERE). The stretch at 29 to 69 (DAAKKEEERQEALRQAEEERKAKYAKMEAEREAVRQGIRDK) forms a coiled coil. An interaction with the SNARE complex region spans residues 48 to 70 (RKAKYAKMEAEREAVRQGIRDKY).

It belongs to the complexin/synaphin family. As to quaternary structure, binds to the SNARE core complex containing SNAP25, VAMP2 and STX1A. As to expression, nervous system. In hippocampus and cerebellum, expressed mainly by inhibitory neurons. Overexpressed in substantia nigra from patients with Parkinson disease.

The protein resides in the cytoplasm. It is found in the cytosol. The protein localises to the perikaryon. It localises to the presynapse. Positively regulates a late step in exocytosis of various cytoplasmic vesicles, such as synaptic vesicles and other secretory vesicles. Organizes the SNAREs into a cross-linked zigzag topology that, when interposed between the vesicle and plasma membranes, is incompatible with fusion, thereby preventing SNAREs from releasing neurotransmitters until an action potential arrives at the synapse. Also involved in glucose-induced secretion of insulin by pancreatic beta-cells. Essential for motor behavior. In Homo sapiens (Human), this protein is Complexin-1 (CPLX1).